We begin with the raw amino-acid sequence, 544 residues long: Cytochrome P450 monooxygenase tenB (544 aa).

The chain crosses the membrane as a helical span at residues 13-33 (LGYYEKVTGILGVVSIILLFW). Positions 438–448 (FDPFRFSRASK) are enriched in basic and acidic residues. The disordered stretch occupies residues 438–467 (FDPFRFSRASKDDDDDDDDDGRSTSSHTKD). A heme-binding site is contributed by Cys486.

The protein belongs to the cytochrome P450 family. Heme is required as a cofactor.

It is found in the membrane. The protein operates within secondary metabolite biosynthesis. Functionally, cytochrome P450 monooxygenase; part of the gene cluster that mediates the biosynthesis of tenellin-type 2-pyridones, iron-chelating compounds involved in iron stress tolerance, competition with the natural competitor fungus Metarhizium robertsii and insect hosts infection. TenB catalyzes the selective N-hydroxylation of the 2-pyridone nitrogen of yield tellinin and 15-hydroxytellenin (15-HT), respectively. The pathway begins with the assembly of the polyketide-amino acid backbone by the hybrid PKS-NRPS tenS with the help of the enoyl reductase tenC. These enzymes catalyze the synthesis of the pyrrolidine-2-dione intermediates pretellinin A, 11-hydropretellenin A, 12-hydropretellenin A, 13-hydropretellenin A, 14-hydropretellenin A, 12-oxopretellenin A and prototellinin D. The cytochrome P450 monooxygenase tenA then catalyzes an oxidative ring expansion of pretenellin A and 14-hydropretellenin A to form the 2-pyridone core, leading to pretenellin B and pyridovericin, respectively. The cytochrome P450 monooxygenase tenB is then required for the selective N-hydroxylation of the 2-pyridone nitrogen of yield tellinin and 15-hydroxytellenin (15-HT), respectively. The UDP-glucosyltransferase GT1 and the methyltransferase MT1, located outside the tenS gene cluster, contribute to the stepwise glycosylation and methylation of 15-HT to obtain the glycoside pyridovericin-N-O-(4-O-methyl-beta-D-glucopyranoside) (PMGP). Additional related compounds such as 1-O-methyl-15-HT, (8Z)-1-O-methyl-15-HT, and O-methyltenellin A are also produced but the enzymes involved in their biosynthesis have still to be determined. This is Cytochrome P450 monooxygenase tenB from Beauveria bassiana (strain ARSEF 2860) (White muscardine disease fungus).